We begin with the raw amino-acid sequence, 134 residues long: Profilin-2 (134 aa).

A disulfide bridge links Cys13 with Cys118. Positions 84-100 (AVIRGKKGSGGITIKKT) match the Involved in PIP2 interaction motif. At Thr114 the chain carries Phosphothreonine.

The protein belongs to the profilin family. In terms of assembly, occurs in many kinds of cells as a complex with monomeric actin in a 1:1 ratio. Post-translationally, phosphorylated by MAP kinases.

Its subcellular location is the cytoplasm. It is found in the cytoskeleton. In terms of biological role, binds to actin and affects the structure of the cytoskeleton. At high concentrations, profilin prevents the polymerization of actin, whereas it enhances it at low concentrations. By binding to PIP2, it inhibits the formation of IP3 and DG. This chain is Profilin-2 (PRO2), found in Olea europaea (Common olive).